The sequence spans 609 residues: Leukotriene A-4 hydrolase (609 aa).

Residues 131–133 (QCQ) and 263–268 (PYGGME) each bind a peptide. His292 serves as a coordination point for Zn(2+). Glu293 functions as the Proton acceptor in the catalytic mechanism. Zn(2+) contacts are provided by His296 and Glu315. Catalysis depends on Tyr380, which acts as the Proton donor. An a peptide-binding site is contributed by 560 to 562 (RMK).

It belongs to the peptidase M1 family. In terms of assembly, homodimer. The cofactor is Zn(2+). In terms of tissue distribution, expressed in oocytes.

It is found in the cytoplasm. The catalysed reaction is Release of the N-terminal residue from a tripeptide.. The enzyme catalyses leukotriene A4 + H2O = leukotriene B4. It participates in lipid metabolism; leukotriene B4 biosynthesis. With respect to regulation, the epoxide hydrolase activity is mildly restrained by suicide inactivation, possibly involving binding of LTA4 to Tyr-380. In terms of biological role, bifunctional zinc metalloenzyme that comprises both epoxide hydrolase (EH) and aminopeptidase activities. Acts as an epoxide hydrolase to catalyze the conversion of leukotriene A4 (LTA4) to the pro-inflammatory mediator leukotriene B4 (LTB4). During the conversion of LTA4 to LTB4, a second product is formed, the isomeric delta6-trans-delta8-cis-LTB4 (5S,12R-dihydroxy-6,10-trans-8,14-cis-eicosatetraenoic acid), with a relative formation of 10% delta6-trans-delta8-cis-LTB4 compared to 90% LTB4. The production of delta6-trans-delta8-cis-LTB4 seems to depend on the phenylalanine residue at position 375. Also has aminopeptidase activity. This is Leukotriene A-4 hydrolase from Xenopus laevis (African clawed frog).